Consider the following 843-residue polypeptide: Glycogen phosphorylase, brain form (843 aa).

Alanine 2 bears the N-acetylalanine mark. Serine 15 is subject to Phosphoserine; by PHK; in form phosphorylase A. Positions 43, 197, and 310 each coordinate AMP. Tyrosine 197 carries the phosphotyrosine modification. The residue at position 473 (tyrosine 473) is a Phosphotyrosine. Lysine 569 provides a ligand contact to pyridoxal 5'-phosphate. The pyridoxal 5'-phosphate stretch occupies residues 677-678 (TG). Lysine 681 bears the N6-(pyridoxal phosphate)lysine mark.

Belongs to the glycogen phosphorylase family. Homodimer. Dimers associate into a tetramer to form the enzymatically active phosphorylase A. The cofactor is pyridoxal 5'-phosphate. Phosphorylation of Ser-15 converts phosphorylase B (unphosphorylated) to phosphorylase A.

The catalysed reaction is [(1-&gt;4)-alpha-D-glucosyl](n) + phosphate = [(1-&gt;4)-alpha-D-glucosyl](n-1) + alpha-D-glucose 1-phosphate. Its activity is regulated as follows. Activity of phosphorylase is controlled both by allosteric means (through the non-covalent binding of metabolites) and by covalent modification. Thus AMP allosterically activates, whereas ATP, ADP, and glucose-6-phosphate allosterically inhibit, phosphorylase B. In terms of biological role, glycogen phosphorylase that regulates glycogen mobilization. Phosphorylase is an important allosteric enzyme in carbohydrate metabolism. Enzymes from different sources differ in their regulatory mechanisms and in their natural substrates. However, all known phosphorylases share catalytic and structural properties. The polypeptide is Glycogen phosphorylase, brain form (PYGB) (Ovis aries (Sheep)).